The primary structure comprises 1765 residues: RANBP2-like and GRIP domain-containing protein 8 (1765 aa).

Thr-19 carries the phosphothreonine modification. Ser-21 carries the phosphoserine modification. TPR repeat units follow at residues 26-59 (SMKG…QERD), 60-93 (PKAH…NPTQ), and 648-681 (EDAH…VSYW). The disordered stretch occupies residues 760–804 (GPLYKNGSLRNADSEIKHSTPSPTKYSLSPSKSYKYSPETPPRWT). The span at 778-797 (STPSPTKYSLSPSKSYKYSP) shows a compositional bias: low complexity. Positions 1036-1172 (HFEPVVQMPE…FEECQRLLLD (137 aa)) constitute a RanBD1 1 domain. Disordered stretches follow at residues 1216–1247 (TEEE…PTLE) and 1306–1330 (AKLN…EERD). Residues 1231 to 1244 (SDTTIKPNAENTGP) show a composition bias toward polar residues. Positions 1317–1329 (TDEESVVTQEEER) are enriched in acidic residues. Positions 1333-1469 (YFEPVVPLPD…FDEAKTAQEK (137 aa)) constitute a RanBD1 2 domain. Residues 1580 to 1593 (NNSETSSVAQSGSE) show a composition bias toward polar residues. Disordered stretches follow at residues 1580–1621 (NNSE…KNLS) and 1746–1765 (KGKL…RSSG). Over residues 1594–1617 (SKVEPKKCELSKNSDIEQSSDSKV) the composition is skewed to basic and acidic residues. The region spanning 1702-1752 (REKSAANLEYLKNVLLQFIFLKPGSERERLLPVINTMLQLSPEEKGKLAAV) is the GRIP domain.

In terms of assembly, interacts with GTP-bound ARL1.

This is RANBP2-like and GRIP domain-containing protein 8 (RGPD8) from Homo sapiens (Human).